A 367-amino-acid chain; its full sequence is MGSGYQLLQLPRERFRKTSFLVWVIILFQRAISMPLGIVTNSTLKATEIDQLVCRDKLSSTSQLKSVGLNLEGNGIATDVPSATKRWGFRSGVPPKVVSYEAGEWAENCYNLEIKKSDGSECLPLPPDGVRGFPRCRYVHKVQGTGPCPGDLAFHKNGAFFLYDRLASTVIYRGTTFAEGVVAFLILSEPKKHFWKATPAHEPVNTTDDSTSYYMTLTLSYEMSNFGGNESNTLFKVDNHTYVQLDRPHTPQFLVQLNETLRRNNRLSNSTGRLTWTLDPKIEPDVGEWAFWETKKTFPNNFMEKTCISKFYQPTPTTPQIRARRELSKEKLATTHPPTTPSWFQRIPLQWFQCSLQDGQRKCRPKV.

The first 33 residues, 1 to 33 (MGSGYQLLQLPRERFRKTSFLVWVIILFQRAIS), serve as a signal peptide directing secretion. N41 carries an N-linked (GlcNAc...) asparagine; by host glycan. Disulfide bonds link C109–C136 and C122–C148. N-linked (GlcNAc...) asparagine; by host glycans are attached at residues N205, N229, N239, N258, and N269.

The protein belongs to the filoviruses glycoprotein family. Homodimer; disulfide-linked. The homodimers are linked by two disulfide bonds in a parallel orientation. In terms of assembly, monomer. Post-translationally, this precursor is processed into mature sGP and delta-peptide by host furin or furin-like proteases. The cleavage site corresponds to the furin optimal cleavage sequence [KR]-X-[KR]-R. In terms of processing, N-glycosylated. O-glycosylated.

Its subcellular location is the secreted. Its function is as follows. Seems to possess an anti-inflammatory activity as it can reverse the barrier-decreasing effects of TNF alpha. Might therefore contribute to the lack of inflammatory reaction seen during infection in spite the of extensive necrosis and massive virus production. Does not seem to be involved in activation of primary macrophages. Does not seem to interact specifically with neutrophils. In terms of biological role, viroporin that permeabilizes mammalian cell plasma membranes. It acts by altering permeation of ionic compounds and small molecules. This activity may lead to viral enterotoxic activity. In Epomops franqueti (Franquet's epauletted fruit bat), this protein is Pre-small/secreted glycoprotein (GP).